We begin with the raw amino-acid sequence, 295 residues long: Farnesyl diphosphate synthase (295 aa).

Isopentenyl diphosphate is bound by residues Lys46, Arg49, and His78. Mg(2+) contacts are provided by Asp85 and Asp91. Arg96 serves as a coordination point for (2E)-geranyl diphosphate. Residue Arg97 participates in isopentenyl diphosphate binding. 4 residues coordinate (2E)-geranyl diphosphate: Lys180, Thr181, Gln220, and Lys237.

The protein belongs to the FPP/GGPP synthase family. It depends on Mg(2+) as a cofactor.

The protein resides in the cytoplasm. It carries out the reaction isopentenyl diphosphate + (2E)-geranyl diphosphate = (2E,6E)-farnesyl diphosphate + diphosphate. The sequence is that of Farnesyl diphosphate synthase (ispA) from Haemophilus influenzae (strain ATCC 51907 / DSM 11121 / KW20 / Rd).